The chain runs to 465 residues: Transposase for insertion sequence IS1202 (465 aa).

The Integrase catalytic domain maps to His-157–Ile-340.

Its function is as follows. Required for the transposition of the insertion element. The chain is Transposase for insertion sequence IS1202 from Streptococcus pneumoniae.